We begin with the raw amino-acid sequence, 98 residues long: MVSSAGLSLTLVAALCALVAPALSSIVSTEGPLPLLREESRINFWNAACAARGVPVDQPTAAAVTFYICLLAVLVVALGYATRTCTRMLHASPAGRRV.

The signal sequence occupies residues 1–24; sequence MVSSAGLSLTLVAALCALVAPALS. Residues 25 to 60 are Virion surface-facing; that stretch reads SIVSTEGPLPLLREESRINFWNAACAARGVPVDQPT. The helical transmembrane segment at 61 to 81 threads the bilayer; that stretch reads AAAVTFYICLLAVLVVALGYA. The Intravirion portion of the chain corresponds to 82–98; sequence TRTCTRMLHASPAGRRV.

It belongs to the herpesviridae glycoprotein N family. In terms of assembly, interacts (via N-terminus) with gM (via N-terminus). The gM-gN heterodimer forms the gCII complex. In terms of processing, O-glycosylated.

Its subcellular location is the virion membrane. The protein resides in the host membrane. It localises to the host Golgi apparatus. The protein localises to the host trans-Golgi network. In terms of biological role, envelope glycoprotein necessary for proper maturation of gM and modulation of its membrane fusion activity. Also plays a critical role in virion morphogenesis. In Suid herpesvirus 1 (SuHV-1), this protein is Envelope glycoprotein N.